The primary structure comprises 369 residues: UDP-N-acetylglucosamine--N-acetylmuramyl-(pentapeptide) pyrophosphoryl-undecaprenol N-acetylglucosamine transferase (369 aa).

UDP-N-acetyl-alpha-D-glucosamine contacts are provided by residues 16 to 18 (TGG), Asn130, Arg171, Ser203, Ile253, and Gln298.

It belongs to the glycosyltransferase 28 family. MurG subfamily.

The protein localises to the cell inner membrane. The catalysed reaction is di-trans,octa-cis-undecaprenyl diphospho-N-acetyl-alpha-D-muramoyl-L-alanyl-D-glutamyl-meso-2,6-diaminopimeloyl-D-alanyl-D-alanine + UDP-N-acetyl-alpha-D-glucosamine = di-trans,octa-cis-undecaprenyl diphospho-[N-acetyl-alpha-D-glucosaminyl-(1-&gt;4)]-N-acetyl-alpha-D-muramoyl-L-alanyl-D-glutamyl-meso-2,6-diaminopimeloyl-D-alanyl-D-alanine + UDP + H(+). It functions in the pathway cell wall biogenesis; peptidoglycan biosynthesis. Its function is as follows. Cell wall formation. Catalyzes the transfer of a GlcNAc subunit on undecaprenyl-pyrophosphoryl-MurNAc-pentapeptide (lipid intermediate I) to form undecaprenyl-pyrophosphoryl-MurNAc-(pentapeptide)GlcNAc (lipid intermediate II). In Cytophaga hutchinsonii (strain ATCC 33406 / DSM 1761 / CIP 103989 / NBRC 15051 / NCIMB 9469 / D465), this protein is UDP-N-acetylglucosamine--N-acetylmuramyl-(pentapeptide) pyrophosphoryl-undecaprenol N-acetylglucosamine transferase.